The chain runs to 319 residues: MLGKAGSVVWMLCAIWVAADALTVETTQDILRAARGRSVTLPCTYNTYVSDREGFIQWDKLLRSQTERVVTWNFVTKKYIYGNRYENRVRVSNDAELSNASITIDQLTMDDNGTYECSVSLMSDQDVNAKSRVRLLVLVPPSKPDCSIQGEMVIGNNIQLTCHSAEGSPSPQYSWKSYNAQNQQRPLTQPVSGEPLLLKNISTETAGYYICTSSNDVGIESCNITVAPRPPSMNIALYAGIAGGVFVALIIIGVIVYCCCCREKDDKDQDREDARPNRAAYQVPKKEQKEISRGREDEDDHRHEDRWSSGRSTPDQPFQ.

A signal peptide spans 1 to 21 (MLGKAGSVVWMLCAIWVAADA). Residues 22–134 (LTVETTQDIL…QDVNAKSRVR (113 aa)) form the Ig-like V-type domain. The Extracellular segment spans residues 22–235 (LTVETTQDIL…VAPRPPSMNI (214 aa)). 3 disulfide bridges follow: C43/C117, C146/C222, and C162/C211. Residues N99, N112, N200, and N223 are each glycosylated (N-linked (GlcNAc...) asparagine). Residues 140–227 (PPSKPDCSIQ…GIESCNITVA (88 aa)) enclose the Ig-like C2-type domain. A helical transmembrane segment spans residues 236-256 (ALYAGIAGGVFVALIIIGVIV). The Cytoplasmic segment spans residues 257-319 (YCCCCREKDD…GRSTPDQPFQ (63 aa)). Basic and acidic residues-rich tracts occupy residues 267-276 (KDQDREDARP) and 284-308 (PKKE…DRWS). The interval 267-319 (KDQDREDARPNRAAYQVPKKEQKEISRGREDEDDHRHEDRWSSGRSTPDQPFQ) is disordered. The span at 309–319 (SGRSTPDQPFQ) shows a compositional bias: polar residues.

Palmitoylated.

The protein resides in the membrane. Functionally, may play a role in cell-cell recognition and signaling. The sequence is that of Cell surface A33 antigen (Gpa33) from Mus musculus (Mouse).